The chain runs to 405 residues: Adenosylhomocysteinase (405 aa).

Residues Asp113 and Glu138 each coordinate substrate. 139–141 (TTT) lines the NAD(+) pocket. Lys168 and Asp172 together coordinate substrate. Residues Asn173, 202–207 (GYGWCG), Glu225, Asn260, 281–283 (AGH), and Asn327 contribute to the NAD(+) site.

The protein belongs to the adenosylhomocysteinase family. The cofactor is NAD(+).

It is found in the cytoplasm. The catalysed reaction is S-adenosyl-L-homocysteine + H2O = L-homocysteine + adenosine. It functions in the pathway amino-acid biosynthesis; L-homocysteine biosynthesis; L-homocysteine from S-adenosyl-L-homocysteine: step 1/1. Its function is as follows. May play a key role in the regulation of the intracellular concentration of adenosylhomocysteine. This Archaeoglobus fulgidus (strain ATCC 49558 / DSM 4304 / JCM 9628 / NBRC 100126 / VC-16) protein is Adenosylhomocysteinase.